Reading from the N-terminus, the 409-residue chain is Immediate early response gene 5-like protein (409 aa).

Disordered stretches follow at residues 168-237 and 312-335; these read QPPH…PSSS and GQEE…GGTP. The span at 184–195 shows a compositional bias: pro residues; the sequence is QPGPAPLPPPAP. 2 stretches are compositionally biased toward low complexity: residues 196 to 212 and 220 to 237; these read AALC…CSAP and PPTV…PSSS. A compositionally biased stretch (acidic residues) spans 313 to 324; the sequence is QEEEDDEEEDAG.

This sequence belongs to the IER family.

In Rattus norvegicus (Rat), this protein is Immediate early response gene 5-like protein (Ier5l).